A 346-amino-acid chain; its full sequence is Phosphoribosylformylglycinamidine cyclo-ligase (346 aa).

The protein belongs to the AIR synthase family.

The protein resides in the cytoplasm. The catalysed reaction is 2-formamido-N(1)-(5-O-phospho-beta-D-ribosyl)acetamidine + ATP = 5-amino-1-(5-phospho-beta-D-ribosyl)imidazole + ADP + phosphate + H(+). The protein operates within purine metabolism; IMP biosynthesis via de novo pathway; 5-amino-1-(5-phospho-D-ribosyl)imidazole from N(2)-formyl-N(1)-(5-phospho-D-ribosyl)glycinamide: step 2/2. The protein is Phosphoribosylformylglycinamidine cyclo-ligase of Photobacterium profundum (strain SS9).